The chain runs to 302 residues: MTQKIKCALIGPGNIGTDLLAKLQRSPVLEPVWMVGIDPESDGLKRAREMGIKTTHEGVDGLIPHMKADGVQIVFDATSAYVHAENSRKVNAQGALMIDLTPAAIGPFCVPPVNLKEHVGKAEMNVNMVTCGGQATIPMVAAVSRVQPVAYGEIVATVSSRSAGPGTRKNIDEFTRTTAGAIEKVGGAQKGKAIIIINPADPPLIMRDTVHCLVEGEPDKEAITRSIHDMLAEVQKYVPGYKLVNGPVFDGNRVSVFLEVEGLGDYLPKYAGNLDIMTAAAARTAEMFAEEILAGKLTLQAA.

C131 serves as the catalytic Acyl-thioester intermediate. Residues 162–170 (SAGPGTRKN) and N273 contribute to the NAD(+) site.

Belongs to the acetaldehyde dehydrogenase family.

It carries out the reaction acetaldehyde + NAD(+) + CoA = acetyl-CoA + NADH + H(+). This Acidovorax sp. (strain JS42) protein is Acetaldehyde dehydrogenase.